A 425-amino-acid chain; its full sequence is Histidine--tRNA ligase (425 aa).

The protein belongs to the class-II aminoacyl-tRNA synthetase family. In terms of assembly, homodimer.

It is found in the cytoplasm. The catalysed reaction is tRNA(His) + L-histidine + ATP = L-histidyl-tRNA(His) + AMP + diphosphate + H(+). In Histophilus somni (strain 129Pt) (Haemophilus somnus), this protein is Histidine--tRNA ligase.